Consider the following 293-residue polypeptide: Epimerase family protein SDR39U1 (293 aa).

NADP(+) is bound by residues 31–32 (SR), 58–59 (LA), Glu-77, Arg-82, and Val-160.

It belongs to the NAD(P)-dependent epimerase/dehydratase family. SDR39U1 subfamily. As to expression, expressed in adrenal gland.

Its function is as follows. Putative NADP-dependent oxidoreductase. The polypeptide is Epimerase family protein SDR39U1 (SDR39U1) (Homo sapiens (Human)).